The sequence spans 156 residues: 6,7-dimethyl-8-ribityllumazine synthase (156 aa).

5-amino-6-(D-ribitylamino)uracil contacts are provided by residues Trp-28, 60 to 62 (SFE), and 82 to 84 (VVV). 87-88 (GT) provides a ligand contact to (2S)-2-hydroxy-3-oxobutyl phosphate. The active-site Proton donor is His-90. Phe-115 serves as a coordination point for 5-amino-6-(D-ribitylamino)uracil. Arg-129 is a (2S)-2-hydroxy-3-oxobutyl phosphate binding site.

It belongs to the DMRL synthase family.

The enzyme catalyses (2S)-2-hydroxy-3-oxobutyl phosphate + 5-amino-6-(D-ribitylamino)uracil = 6,7-dimethyl-8-(1-D-ribityl)lumazine + phosphate + 2 H2O + H(+). The protein operates within cofactor biosynthesis; riboflavin biosynthesis; riboflavin from 2-hydroxy-3-oxobutyl phosphate and 5-amino-6-(D-ribitylamino)uracil: step 1/2. Functionally, catalyzes the formation of 6,7-dimethyl-8-ribityllumazine by condensation of 5-amino-6-(D-ribitylamino)uracil with 3,4-dihydroxy-2-butanone 4-phosphate. This is the penultimate step in the biosynthesis of riboflavin. In Kocuria rhizophila (strain ATCC 9341 / DSM 348 / NBRC 103217 / DC2201), this protein is 6,7-dimethyl-8-ribityllumazine synthase.